The following is a 214-amino-acid chain: ATP phosphoribosyltransferase (214 aa).

It belongs to the ATP phosphoribosyltransferase family. Short subfamily. As to quaternary structure, heteromultimer composed of HisG and HisZ subunits.

The protein localises to the cytoplasm. It carries out the reaction 1-(5-phospho-beta-D-ribosyl)-ATP + diphosphate = 5-phospho-alpha-D-ribose 1-diphosphate + ATP. It functions in the pathway amino-acid biosynthesis; L-histidine biosynthesis; L-histidine from 5-phospho-alpha-D-ribose 1-diphosphate: step 1/9. In terms of biological role, catalyzes the condensation of ATP and 5-phosphoribose 1-diphosphate to form N'-(5'-phosphoribosyl)-ATP (PR-ATP). Has a crucial role in the pathway because the rate of histidine biosynthesis seems to be controlled primarily by regulation of HisG enzymatic activity. This is ATP phosphoribosyltransferase from Marinobacter nauticus (strain ATCC 700491 / DSM 11845 / VT8) (Marinobacter aquaeolei).